The sequence spans 166 residues: Nascent polypeptide-associated complex subunit beta (166 aa).

2 disordered regions span residues 1–40 and 129–166; these read MVLN…EDPK and HAAS…DKLD. Positions 35-100 constitute an NAC-A/B domain; it reads GGEDPKLQAA…GVDKELTELV (66 aa). The span at 141–153 shows a compositional bias: acidic residues; sequence DDDDVPDVVENFD. The span at 154 to 166 shows a compositional bias: basic and acidic residues; sequence EADKKETEVDKLD.

Belongs to the NAC-beta family. As to quaternary structure, part of the nascent polypeptide-associated complex (NAC), consisting of EGD2 and EGD1. NAC associates with ribosomes via EGD1.

Its subcellular location is the cytoplasm. It localises to the nucleus. Component of the nascent polypeptide-associated complex (NAC), a dynamic component of the ribosomal exit tunnel, protecting the emerging polypeptides from interaction with other cytoplasmic proteins to ensure appropriate nascent protein targeting. The NAC complex also promotes mitochondrial protein import by enhancing productive ribosome interactions with the outer mitochondrial membrane and blocks the inappropriate interaction of ribosomes translating non-secretory nascent polypeptides with translocation sites in the membrane of the endoplasmic reticulum. EGD1 may act as a transcription factor that exert a negative effect on the expression of several genes that are transcribed by RNA polymerase II. The polypeptide is Nascent polypeptide-associated complex subunit beta (EGD1) (Mycosarcoma maydis (Corn smut fungus)).